We begin with the raw amino-acid sequence, 175 residues long: Large ribosomal subunit protein uL10 (175 aa).

Belongs to the universal ribosomal protein uL10 family. In terms of assembly, part of the ribosomal stalk of the 50S ribosomal subunit. The N-terminus interacts with L11 and the large rRNA to form the base of the stalk. The C-terminus forms an elongated spine to which L12 dimers bind in a sequential fashion forming a multimeric L10(L12)X complex.

Forms part of the ribosomal stalk, playing a central role in the interaction of the ribosome with GTP-bound translation factors. This Xylella fastidiosa (strain M23) protein is Large ribosomal subunit protein uL10.